We begin with the raw amino-acid sequence, 303 residues long: Phosphoglycerate mutase 3 (303 aa).

Residues R13–N20, C26–G27, R70, E120–Y123, K131, and R147–R148 contribute to the substrate site. H14 (tele-phosphohistidine intermediate) is an active-site residue. The active-site Proton donor/acceptor is the E120. A disordered region spans residues N168–P198. A compositionally biased stretch (basic and acidic residues) spans D177–P198. G236–S237 contributes to the substrate binding site.

It belongs to the phosphoglycerate mutase family. BPG-dependent PGAM subfamily.

The enzyme catalyses (2R)-2-phosphoglycerate = (2R)-3-phosphoglycerate. The protein operates within carbohydrate degradation; glycolysis; pyruvate from D-glyceraldehyde 3-phosphate: step 3/5. Could be non-functional. In Saccharomyces cerevisiae (strain ATCC 204508 / S288c) (Baker's yeast), this protein is Phosphoglycerate mutase 3 (GPM3).